Consider the following 207-residue polypeptide: Small ribosomal subunit protein uS4c (207 aa).

The 62-residue stretch at 92–153 (MRLDNILFRL…PKTYQSILSK (62 aa)) folds into the S4 RNA-binding domain.

It belongs to the universal ribosomal protein uS4 family. In terms of assembly, part of the 30S ribosomal subunit. Contacts protein S5. The interaction surface between S4 and S5 is involved in control of translational fidelity.

It localises to the plastid. Its subcellular location is the chloroplast. Functionally, one of the primary rRNA binding proteins, it binds directly to 16S rRNA where it nucleates assembly of the body of the 30S subunit. In terms of biological role, with S5 and S12 plays an important role in translational accuracy. This Equisetum laevigatum (Smooth horsetail) protein is Small ribosomal subunit protein uS4c (rps4).